We begin with the raw amino-acid sequence, 242 residues long: Response regulator GtcR (242 aa).

One can recognise a Response regulatory domain in the interval 4-117 (TILIADDEPE…EAVARIQAQL (114 aa)). Position 53 is a 4-aspartylphosphate (Asp-53). Positions 133 to 233 (TQSTTVGRLT…VRGLGYKFAS (101 aa)) form a DNA-binding region, ompR/PhoB-type.

In terms of processing, phosphorylated by GtcS.

In terms of biological role, member of the two-component regulatory system GtcS/GtcR which may act in the control of the transcription of the grs operon which encodes the multienzymes involved in the biosynthesis of the peptide antibiotic gramicidin S. The polypeptide is Response regulator GtcR (gtcR) (Aneurinibacillus migulanus (Bacillus migulanus)).